We begin with the raw amino-acid sequence, 238 residues long: 2-C-methyl-D-erythritol 4-phosphate cytidylyltransferase (238 aa).

It belongs to the IspD/TarI cytidylyltransferase family. IspD subfamily.

The catalysed reaction is 2-C-methyl-D-erythritol 4-phosphate + CTP + H(+) = 4-CDP-2-C-methyl-D-erythritol + diphosphate. Its pathway is isoprenoid biosynthesis; isopentenyl diphosphate biosynthesis via DXP pathway; isopentenyl diphosphate from 1-deoxy-D-xylulose 5-phosphate: step 2/6. In terms of biological role, catalyzes the formation of 4-diphosphocytidyl-2-C-methyl-D-erythritol from CTP and 2-C-methyl-D-erythritol 4-phosphate (MEP). The protein is 2-C-methyl-D-erythritol 4-phosphate cytidylyltransferase of Paraburkholderia phytofirmans (strain DSM 17436 / LMG 22146 / PsJN) (Burkholderia phytofirmans).